A 313-amino-acid polypeptide reads, in one-letter code: RHOMBOID-like protein 7 (313 aa).

The segment covering 1–11 (MLSTAAEEDPE) has biased composition (acidic residues). Residues 1–24 (MLSTAAEEDPEGGSRETNNGGETT) are disordered. Over residues 15-24 (RETNNGGETT) the composition is skewed to polar residues. Transmembrane regions (helical) follow at residues 31 to 51 (SWII…VMYY), 112 to 132 (WLHA…YIGV), 143 to 163 (VGTI…LFLE), 166 to 186 (ISVG…SELL), 196 to 216 (GVAI…GTLP), 221 to 241 (FAHI…LIHP), and 269 to 289 (LCIV…VILF). The active-site Nucleophile is the Ser-171. His-223 serves as the catalytic Charge relay system.

This sequence belongs to the peptidase S54 family.

The protein resides in the membrane. It carries out the reaction Cleaves type-1 transmembrane domains using a catalytic dyad composed of serine and histidine that are contributed by different transmembrane domains.. Probable rhomboid-type serine protease that catalyzes intramembrane proteolysis. May function in embryo development. The polypeptide is RHOMBOID-like protein 7 (Arabidopsis thaliana (Mouse-ear cress)).